Here is a 1105-residue protein sequence, read N- to C-terminus: AP-3 complex subunit beta-1 (1105 aa).

Disordered stretches follow at residues 1–26 (MSSN…EATS) and 271–292 (KNFY…KKSY). Phosphoserine is present on residues Ser276 and Ser610. The interval 668–824 (KKEKPMKKFY…KPQQERHPPS (157 aa)) is disordered. Acidic residues predominate over residues 679–704 (ESEEEEDEDEDEDEEEEEKEDEDENP). 2 stretches are compositionally biased toward low complexity: residues 705–722 (SDSS…SGDT) and 730–741 (DSSSGQDSETGS). Over residues 750 to 759 (VAKRNSKTKR) the composition is skewed to basic residues. Basic and acidic residues predominate over residues 760–774 (KSDSENREKKNENSK). Phosphoserine occurs at positions 761 and 763. Residues 775-788 (ASESSSEESSSMED) show a composition bias toward low complexity. A compositionally biased stretch (acidic residues) spans 789–799 (SSSESESESGS). Over residues 811–824 (AKERKPQQERHPPS) the composition is skewed to basic and acidic residues.

It belongs to the adaptor complexes large subunit family. In terms of assembly, adaptor protein complex 3 (AP-3) is a heterotetramer composed of two large adaptins (delta-type subunit AP3D1 and beta-type subunit AP3B1 or AP3B2), a medium adaptin (mu-type subunit AP3M1 or AP3M2) and a small adaptin (sigma-type subunit APS1 or AP3S2). AP-3 associates with the BLOC-1 complex. Interacts with KIF3A; interaction is direct; interaction is impaired by pyrophosphorylation of AP3B1. Post-translationally, phosphorylated on serine residues. Pyrophosphorylated by 5-diphosphoinositol pentakisphosphate (5-IP7). Pyrophosphorylation impairs interaction with KIF3A. Serine pyrophosphorylation is achieved by Mg(2+)-dependent, but enzyme independent transfer of a beta-phosphate from a inositol pyrophosphate to a pre-phosphorylated serine residue. In terms of tissue distribution, ubiquitously expressed.

Its subcellular location is the cytoplasmic vesicle. The protein localises to the clathrin-coated vesicle membrane. It is found in the golgi apparatus. Its function is as follows. Subunit of non-clathrin- and clathrin-associated adaptor protein complex 3 (AP-3) that plays a role in protein sorting in the late-Golgi/trans-Golgi network (TGN) and/or endosomes. The AP complexes mediate both the recruitment of clathrin to membranes and the recognition of sorting signals within the cytosolic tails of transmembrane cargo molecules. AP-3 appears to be involved in the sorting of a subset of transmembrane proteins targeted to lysosomes and lysosome-related organelles. In concert with the BLOC-1 complex, AP-3 is required to target cargos into vesicles assembled at cell bodies for delivery into neurites and nerve terminals. This is AP-3 complex subunit beta-1 (Ap3b1) from Mus musculus (Mouse).